The sequence spans 304 residues: Killer cell immunoglobulin-like receptor 2DS1 (304 aa).

The signal sequence occupies residues 1 to 21 (MSLTVVSMACVGFFLLQGAWP). Over 22–245 (HEGVHRKPSL…SETGNPRHLH (224 aa)) the chain is Extracellular. 2 consecutive Ig-like C2-type domains span residues 42–107 (EETV…VTHS) and 142–205 (GENV…FRDS). A disulfide bond links cysteine 49 and cysteine 100. Asparagine 67, asparagine 84, asparagine 144, and asparagine 178 each carry an N-linked (GlcNAc...) asparagine glycan. Cysteines 149 and 198 form a disulfide. A disordered region spans residues 220 to 239 (VTGNPSNSWPSPTEPSSETG). Residues 223 to 239 (NPSNSWPSPTEPSSETG) are compositionally biased toward low complexity. Residues 246-264 (VLIGTSVVKIPFTILLFFL) form a helical membrane-spanning segment. Residues 265 to 304 (LHRWCSDKKNAAVMDQEPAGNRTVNSEDSDEQDHQEVSYA) are Cytoplasmic-facing. Residues 280–304 (QEPAGNRTVNSEDSDEQDHQEVSYA) form a disordered region.

Belongs to the immunoglobulin superfamily. In terms of assembly, interacts with the adapter protein TYROBP/DAP12; the interaction enhances KIR2DS1 stability at the cell surface. As to expression, expressed by NK cells.

It is found in the cell membrane. Receptor on natural killer (NK) cells for some HLA-C alleles such as w6. Does not inhibit the activity of NK cells. This is Killer cell immunoglobulin-like receptor 2DS1 from Homo sapiens (Human).